Here is a 433-residue protein sequence, read N- to C-terminus: Ribosomal RNA small subunit methyltransferase B (433 aa).

Residues 254–260 (CAAPGGK), Asp277, Asp303, and Asp322 contribute to the S-adenosyl-L-methionine site. Cys375 (nucleophile) is an active-site residue.

Belongs to the class I-like SAM-binding methyltransferase superfamily. RsmB/NOP family.

It localises to the cytoplasm. The catalysed reaction is cytidine(967) in 16S rRNA + S-adenosyl-L-methionine = 5-methylcytidine(967) in 16S rRNA + S-adenosyl-L-homocysteine + H(+). Specifically methylates the cytosine at position 967 (m5C967) of 16S rRNA. This is Ribosomal RNA small subunit methyltransferase B from Sodalis glossinidius (strain morsitans).